A 639-amino-acid polypeptide reads, in one-letter code: Chaperone protein HtpG (639 aa).

Residues 1–348 (MAQYEFQTEV…SEDLPLNVSR (348 aa)) are a; substrate-binding. Positions 349 to 565 (EILQQNRVLA…ENDPTVQMER (217 aa)) are b. Residues 566–639 (LMRATGQTHK…KRVNRLLARG (74 aa)) are c.

This sequence belongs to the heat shock protein 90 family. In terms of assembly, homodimer.

Its subcellular location is the cytoplasm. Functionally, molecular chaperone. Has ATPase activity. The protein is Chaperone protein HtpG of Treponema pallidum (strain Nichols).